A 334-amino-acid chain; its full sequence is N-acetyl-gamma-glutamyl-phosphate reductase (334 aa).

The active site involves C154.

Belongs to the NAGSA dehydrogenase family. Type 1 subfamily.

It localises to the cytoplasm. It carries out the reaction N-acetyl-L-glutamate 5-semialdehyde + phosphate + NADP(+) = N-acetyl-L-glutamyl 5-phosphate + NADPH + H(+). The protein operates within amino-acid biosynthesis; L-arginine biosynthesis; N(2)-acetyl-L-ornithine from L-glutamate: step 3/4. In terms of biological role, catalyzes the NADPH-dependent reduction of N-acetyl-5-glutamyl phosphate to yield N-acetyl-L-glutamate 5-semialdehyde. This is N-acetyl-gamma-glutamyl-phosphate reductase from Escherichia coli O6:H1 (strain CFT073 / ATCC 700928 / UPEC).